A 340-amino-acid polypeptide reads, in one-letter code: GTPase Obg (340 aa).

In terms of domain architecture, Obg spans 1–161; that stretch reads MKFVDMTNIT…QHLLLELLLI (161 aa). The OBG-type G domain occupies 162–335; sequence ANVGIFGLPN…LCNSIMKFIM (174 aa). Residues 168–175, 193–197, 215–218, 285–288, and 316–318 each bind GTP; these read GLPNSGKS, FTTLV, DIPG, NKID, and SSI. Mg(2+)-binding residues include Ser175 and Thr195.

The protein belongs to the TRAFAC class OBG-HflX-like GTPase superfamily. OBG GTPase family. Monomer. The cofactor is Mg(2+).

The protein resides in the cytoplasm. An essential GTPase which binds GTP, GDP and possibly (p)ppGpp with moderate affinity, with high nucleotide exchange rates and a fairly low GTP hydrolysis rate. Plays a role in control of the cell cycle, stress response, ribosome biogenesis and in those bacteria that undergo differentiation, in morphogenesis control. The protein is GTPase Obg of Blochmanniella pennsylvanica (strain BPEN).